Consider the following 67-residue polypeptide: Copper transport protein ATOX1 homolog (67 aa).

Positions 1-64 (MTYSFFVDMT…NIQKTGKKCS (64 aa)) constitute an HMA domain. Positions 11 and 14 each coordinate Cu cation.

Belongs to the ATX1 family.

Functionally, could bind and deliver cytosolic copper to the copper ATPase proteins. May be important in cellular antioxidant defense. In Dictyostelium discoideum (Social amoeba), this protein is Copper transport protein ATOX1 homolog (atox1).